We begin with the raw amino-acid sequence, 415 residues long: Serine hydroxymethyltransferase (415 aa).

Residues L117 and 121-123 contribute to the (6S)-5,6,7,8-tetrahydrofolate site; that span reads GHL. K225 carries the post-translational modification N6-(pyridoxal phosphate)lysine. Position 349–351 (349–351) interacts with (6S)-5,6,7,8-tetrahydrofolate; sequence SPF.

It belongs to the SHMT family. As to quaternary structure, homodimer. Pyridoxal 5'-phosphate serves as cofactor.

It is found in the cytoplasm. The catalysed reaction is (6R)-5,10-methylene-5,6,7,8-tetrahydrofolate + glycine + H2O = (6S)-5,6,7,8-tetrahydrofolate + L-serine. Its pathway is one-carbon metabolism; tetrahydrofolate interconversion. It functions in the pathway amino-acid biosynthesis; glycine biosynthesis; glycine from L-serine: step 1/1. Its function is as follows. Catalyzes the reversible interconversion of serine and glycine with tetrahydrofolate (THF) serving as the one-carbon carrier. This reaction serves as the major source of one-carbon groups required for the biosynthesis of purines, thymidylate, methionine, and other important biomolecules. Also exhibits THF-independent aldolase activity toward beta-hydroxyamino acids, producing glycine and aldehydes, via a retro-aldol mechanism. The polypeptide is Serine hydroxymethyltransferase (Nitratiruptor sp. (strain SB155-2)).